Consider the following 35-residue polypeptide: Photosystem II reaction center protein M (35 aa).

A helical membrane pass occupies residues 7 to 27 (GFIATILFVLVPTVFLLILYI).

The protein belongs to the PsbM family. In terms of assembly, PSII is composed of 1 copy each of membrane proteins PsbA, PsbB, PsbC, PsbD, PsbE, PsbF, PsbH, PsbI, PsbJ, PsbK, PsbL, PsbM, PsbT, PsbX, PsbY, PsbZ, Psb30/Ycf12, peripheral proteins PsbO, CyanoQ (PsbQ), PsbU, PsbV and a large number of cofactors. It forms dimeric complexes.

The protein resides in the cellular thylakoid membrane. One of the components of the core complex of photosystem II (PSII). PSII is a light-driven water:plastoquinone oxidoreductase that uses light energy to abstract electrons from H(2)O, generating O(2) and a proton gradient subsequently used for ATP formation. It consists of a core antenna complex that captures photons, and an electron transfer chain that converts photonic excitation into a charge separation. This subunit is found at the monomer-monomer interface. This is Photosystem II reaction center protein M from Gloeothece citriformis (strain PCC 7424) (Cyanothece sp. (strain PCC 7424)).